Here is a 341-residue protein sequence, read N- to C-terminus: Ferredoxin--NADP reductase (341 aa).

FAD is bound by residues D38, Q46, Y51, V91, F125, D292, and T333.

Belongs to the ferredoxin--NADP reductase type 2 family. As to quaternary structure, homodimer. Requires FAD as cofactor.

It catalyses the reaction 2 reduced [2Fe-2S]-[ferredoxin] + NADP(+) + H(+) = 2 oxidized [2Fe-2S]-[ferredoxin] + NADPH. In Gluconacetobacter diazotrophicus (strain ATCC 49037 / DSM 5601 / CCUG 37298 / CIP 103539 / LMG 7603 / PAl5), this protein is Ferredoxin--NADP reductase.